The sequence spans 355 residues: Peptide chain release factor 1 (355 aa).

N5-methylglutamine is present on Gln-231. Residues 283 to 303 are disordered; the sequence is NAQNKEARKTQVGSGDRSERI.

Belongs to the prokaryotic/mitochondrial release factor family. In terms of processing, methylated by PrmC. Methylation increases the termination efficiency of RF1.

The protein localises to the cytoplasm. Its function is as follows. Peptide chain release factor 1 directs the termination of translation in response to the peptide chain termination codons UAG and UAA. The sequence is that of Peptide chain release factor 1 from Helicobacter hepaticus (strain ATCC 51449 / 3B1).